A 375-amino-acid polypeptide reads, in one-letter code: Putative glutamate--cysteine ligase 2 (375 aa).

This sequence belongs to the glutamate--cysteine ligase type 2 family. YbdK subfamily.

It carries out the reaction L-cysteine + L-glutamate + ATP = gamma-L-glutamyl-L-cysteine + ADP + phosphate + H(+). In terms of biological role, ATP-dependent carboxylate-amine ligase which exhibits weak glutamate--cysteine ligase activity. This Sorangium cellulosum (strain So ce56) (Polyangium cellulosum (strain So ce56)) protein is Putative glutamate--cysteine ligase 2.